Here is a 313-residue protein sequence, read N- to C-terminus: Aspartate carbamoyltransferase catalytic subunit (313 aa).

Residues Arg58 and Thr59 each coordinate carbamoyl phosphate. Lys86 serves as a coordination point for L-aspartate. Carbamoyl phosphate contacts are provided by Arg108, His136, and Gln139. L-aspartate contacts are provided by Arg169 and Arg223. Residues Gly264 and Pro265 each coordinate carbamoyl phosphate.

The protein belongs to the aspartate/ornithine carbamoyltransferase superfamily. ATCase family. In terms of assembly, heterododecamer (2C3:3R2) of six catalytic PyrB chains organized as two trimers (C3), and six regulatory PyrI chains organized as three dimers (R2).

It carries out the reaction carbamoyl phosphate + L-aspartate = N-carbamoyl-L-aspartate + phosphate + H(+). It functions in the pathway pyrimidine metabolism; UMP biosynthesis via de novo pathway; (S)-dihydroorotate from bicarbonate: step 2/3. Functionally, catalyzes the condensation of carbamoyl phosphate and aspartate to form carbamoyl aspartate and inorganic phosphate, the committed step in the de novo pyrimidine nucleotide biosynthesis pathway. This chain is Aspartate carbamoyltransferase catalytic subunit, found in Syntrophotalea carbinolica (strain DSM 2380 / NBRC 103641 / GraBd1) (Pelobacter carbinolicus).